We begin with the raw amino-acid sequence, 1110 residues long: Isoleucine--tRNA ligase (1110 aa).

The 'HIGH' region signature appears at 47-57; sequence PSANGTPGIHH. The 'KMSKS' region signature appears at 658-662; it reads KMSKR. Position 661 (Lys661) interacts with ATP.

This sequence belongs to the class-I aminoacyl-tRNA synthetase family. IleS type 2 subfamily. As to quaternary structure, monomer. Zn(2+) is required as a cofactor.

Its subcellular location is the cytoplasm. It catalyses the reaction tRNA(Ile) + L-isoleucine + ATP = L-isoleucyl-tRNA(Ile) + AMP + diphosphate. Its function is as follows. Catalyzes the attachment of isoleucine to tRNA(Ile). As IleRS can inadvertently accommodate and process structurally similar amino acids such as valine, to avoid such errors it has two additional distinct tRNA(Ile)-dependent editing activities. One activity is designated as 'pretransfer' editing and involves the hydrolysis of activated Val-AMP. The other activity is designated 'posttransfer' editing and involves deacylation of mischarged Val-tRNA(Ile). The polypeptide is Isoleucine--tRNA ligase (Cytophaga hutchinsonii (strain ATCC 33406 / DSM 1761 / CIP 103989 / NBRC 15051 / NCIMB 9469 / D465)).